A 211-amino-acid chain; its full sequence is MVIKKVNLDIVVGVTSTLPETPFPEVAFAGKSNVGKSSLINALMNRKSYARTSSQPGKTQTINFYNINDSMYLVDLPGYGYANVSPAVKAKWGKMIEKYLRKSSQLKQVFLLIDIRHDPSDNDRMMYDWIVNNGYRPVIVATKLDKIKRSQISKQVKAVRTGLGLRQEDILIPFSSQTKQGLKELWQLIDSYVLPQEENETDSESAAIIQE.

Residues 22–195 form the EngB-type G domain; it reads PFPEVAFAGK…WQLIDSYVLP (174 aa). GTP is bound by residues 30–37, 57–61, 75–78, 142–145, and 174–176; these read GKSNVGKS, GKTQT, DLPG, TKLD, and FSS. Positions 37 and 59 each coordinate Mg(2+).

This sequence belongs to the TRAFAC class TrmE-Era-EngA-EngB-Septin-like GTPase superfamily. EngB GTPase family. The cofactor is Mg(2+).

In terms of biological role, necessary for normal cell division and for the maintenance of normal septation. The protein is Probable GTP-binding protein EngB of Lachnospira eligens (strain ATCC 27750 / DSM 3376 / VPI C15-48 / C15-B4) (Eubacterium eligens).